A 395-amino-acid chain; its full sequence is MFRRIFLFDEDSLNSSVTSYTNASQSTTTIMDYSLKSSDTQGSSSGIFTDHPGLNPCSERIVELQYDIRLKLGALMPKESAQKVLEASEALHGESNNIAFLEYLLEDLQQNGVGGEAYKDAVDLSKDLVSSPLEQFEIISLIPMKIGNLYFSFTNPSLFMLLTLSLVLLLVYFVTKKGGGNSVPNAWQSLVELIYDFVLNPVNEQIGGLSGNVKQKFSPRISVTFTFSLFCNPQGMIPYSFTVTSHFLITLGLSFSIFIGITIVGFQKNGLHFLSFLLPAGVPLPLAPFLVLLELIPYCFRALSSGIRLFANMMAGHSSVKILSGFAWTMLCMNDLLYFIGDLGPLFIVLALTGLELGVAISQAHVSTILICIYLNDAINLHQSASFFIIEQKRV.

5 consecutive transmembrane segments (helical) span residues 153–173 (FTNP…LVYF), 246–266 (HFLI…IVGF), 273–293 (FLSF…LVLL), 313–333 (MMAG…MLCM), and 339–359 (FIGD…ELGV).

It belongs to the ATPase A chain family. In terms of assembly, F-type ATPases have 2 components, CF(1) - the catalytic core - and CF(0) - the membrane proton channel. CF(1) has five subunits: alpha(3), beta(3), gamma(1), delta(1), epsilon(1). CF(0) has three main subunits: a, b and c.

It is found in the mitochondrion inner membrane. Mitochondrial membrane ATP synthase (F(1)F(0) ATP synthase or Complex V) produces ATP from ADP in the presence of a proton gradient across the membrane which is generated by electron transport complexes of the respiratory chain. F-type ATPases consist of two structural domains, F(1) - containing the extramembraneous catalytic core and F(0) - containing the membrane proton channel, linked together by a central stalk and a peripheral stalk. During catalysis, ATP synthesis in the catalytic domain of F(1) is coupled via a rotary mechanism of the central stalk subunits to proton translocation. Key component of the proton channel; it may play a direct role in the translocation of protons across the membrane. This chain is ATP synthase subunit a (ATP6), found in Nicotiana tabacum (Common tobacco).